We begin with the raw amino-acid sequence, 103 residues long: uncharacterized protein (103 aa).

Residues 35 to 57 (PFVSMFQTFLEVLTATVLAFTAY) form a helical membrane-spanning segment.

It is found in the host membrane. This is an uncharacterized protein from Acidianus bottle-shaped virus (isolate Italy/Pozzuoli) (ABV).